Consider the following 380-residue polypeptide: MSSFLSKRFISTTQRAMSQLPKAKSLIYSSHDQDVSKILKVHTYQPKGSAESSILLKTLAFPINPSDINQLEGVYPSKPEKVLDYSTEKPSAIAGNKGLFEVVSLPSGVKNLKAGDRVIPLQANFGTWSTYRTCESENDLIKIEGVDLYTAATIAVNGCTAYQMVNDYIEWDPSGNDWLVQNAGTSSVSKIVTQIAKDKGIKTLSVVRDRDNFDEVAENLEKKYGATKVISESQNGEREFGNEVLPKILGPNAQVKLALNSVGGKSCTNIARKLSPNGLMLTYGGMSKQPVTLPTGLFIFNSIRSHGFWVTANSKRDPENKRKTVDAVVKLYRDGKIISPKEDIRTLEWDVNNLSDEGVLDLVNRGIATKGAKNMVVLKW.

A mitochondrion-targeting transit peptide spans 1–17; the sequence is MSSFLSKRFISTTQRAM.

Belongs to the zinc-containing alcohol dehydrogenase family. Quinone oxidoreductase subfamily. In terms of assembly, homodimer.

Its subcellular location is the mitochondrion. The catalysed reaction is a quinone + NADH + H(+) = a quinol + NAD(+). It catalyses the reaction a quinone + NADPH + H(+) = a quinol + NADP(+). In terms of biological role, NADPH quinone oxidoreductase that efficiently reduces 1,4-benzoquinone, whereas no activities are found for menadiones and methoxyquinones. The polypeptide is NADPH quinone oxidoreductase (Kluyveromyces marxianus (Yeast)).